The following is a 141-amino-acid chain: Nucleoside triphosphatase NudI (141 aa).

Residues 1–141 (MRQRTIVCPL…RKTLRLKGLL (141 aa)) enclose the Nudix hydrolase domain. The Nudix box motif lies at 38–59 (GGVEPGERIEEALRREIREELG).

This sequence belongs to the Nudix hydrolase family. NudI subfamily. As to quaternary structure, monomer. Mg(2+) is required as a cofactor.

The enzyme catalyses a ribonucleoside 5'-triphosphate + H2O = a ribonucleoside 5'-phosphate + diphosphate + H(+). The catalysed reaction is a 2'-deoxyribonucleoside 5'-triphosphate + H2O = a 2'-deoxyribonucleoside 5'-phosphate + diphosphate + H(+). It catalyses the reaction dUTP + H2O = dUMP + diphosphate + H(+). It carries out the reaction dTTP + H2O = dTMP + diphosphate + H(+). The enzyme catalyses dCTP + H2O = dCMP + diphosphate + H(+). Its function is as follows. Catalyzes the hydrolysis of nucleoside triphosphates, with a preference for pyrimidine deoxynucleoside triphosphates (dUTP, dTTP and dCTP). In Escherichia coli O17:K52:H18 (strain UMN026 / ExPEC), this protein is Nucleoside triphosphatase NudI.